A 309-amino-acid chain; its full sequence is Polyprenal reductase (309 aa).

The Cytoplasmic portion of the chain corresponds to 1-3; the sequence is MFH. A helical membrane pass occupies residues 4–24; the sequence is ILSIVNIIWLLLALCFGAAFC. Residues 25-67 are Lumenal-facing; the sequence is LNKFSVKLPNRVEHVFQDFIRYGKTKENIKRASWQLVFDLSKR. The helical transmembrane segment at 68 to 88 threads the bilayer; that stretch reads YFYHFYVVSVMWNGLLLLFSI. The Cytoplasmic portion of the chain corresponds to 89-114; the sequence is RSVVMSEAFPDWIIDVLGSLTGRSRG. Residues 115–135 traverse the membrane as a helical segment; the sequence is AWNEIHLSTLLLQVLLWVHTL. Residues 136-150 lie on the Lumenal side of the membrane; the sequence is RRLLECLFVSVFSDG. The helical transmembrane segment at 151 to 171 threads the bilayer; the sequence is VINVVQYAFGLSYYIILGLTV. The Cytoplasmic portion of the chain corresponds to 172 to 185; the sequence is LCTNDSLPQSESVS. A helical transmembrane segment spans residues 186 to 206; the sequence is FFNQLTWYHVVGTLLFFWASF. The Lumenal portion of the chain corresponds to 207 to 255; the sequence is LQHQSLSLLAKMRTDSSGKVETLAHKMPCGGWFELVSCPHYLAELLIYA. A helical transmembrane segment spans residues 256 to 276; it reads AMCVCCGCASLTWWMVVLYVL. The Cytoplasmic segment spans residues 277-309; sequence CNQALAAQLCHEYYRSKFKTYPHHRKAFIPFVL.

It belongs to the steroid 5-alpha reductase family. Polyprenal reductase subfamily.

The protein localises to the endoplasmic reticulum membrane. It carries out the reaction a di-trans,poly-cis-dolichal + NADP(+) = a di-trans,poly-cis-polyprenal + NADPH + H(+). The enzyme catalyses a 3-oxo-5alpha-steroid + NADP(+) = a 3-oxo-Delta(4)-steroid + NADPH + H(+). The catalysed reaction is androst-4-ene-3,17-dione + NADPH + H(+) = 5alpha-androstan-3,17-dione + NADP(+). It catalyses the reaction 17beta-hydroxy-5alpha-androstan-3-one + NADP(+) = testosterone + NADPH + H(+). It functions in the pathway protein modification; protein glycosylation. Its function is as follows. Plays a key role in early steps of protein N-linked glycosylation by being involved in the conversion of polyprenol into dolichol. Acts as a polyprenal reductase that mediates the reduction of polyprenal into dolichal in a NADP-dependent mechanism. Dolichols are required for the synthesis of dolichol-linked monosaccharides and the oligosaccharide precursor used for N-glycosylation. Also able to convert testosterone (T) into 5-alpha-dihydrotestosterone (DHT). The protein is Polyprenal reductase (srd5a3) of Danio rerio (Zebrafish).